A 189-amino-acid polypeptide reads, in one-letter code: Peptidyl-tRNA hydrolase (189 aa).

Residue Tyr-15 coordinates tRNA. Catalysis depends on His-20, which acts as the Proton acceptor. Residues Phe-66, Asn-68, and Asn-114 each coordinate tRNA.

It belongs to the PTH family. Monomer.

It is found in the cytoplasm. The enzyme catalyses an N-acyl-L-alpha-aminoacyl-tRNA + H2O = an N-acyl-L-amino acid + a tRNA + H(+). Hydrolyzes ribosome-free peptidyl-tRNAs (with 1 or more amino acids incorporated), which drop off the ribosome during protein synthesis, or as a result of ribosome stalling. Its function is as follows. Catalyzes the release of premature peptidyl moieties from peptidyl-tRNA molecules trapped in stalled 50S ribosomal subunits, and thus maintains levels of free tRNAs and 50S ribosomes. This chain is Peptidyl-tRNA hydrolase, found in Streptococcus pneumoniae (strain CGSP14).